A 74-amino-acid chain; its full sequence is Exodeoxyribonuclease 7 small subunit (74 aa).

The protein belongs to the XseB family. As to quaternary structure, heterooligomer composed of large and small subunits.

The protein resides in the cytoplasm. It catalyses the reaction Exonucleolytic cleavage in either 5'- to 3'- or 3'- to 5'-direction to yield nucleoside 5'-phosphates.. In terms of biological role, bidirectionally degrades single-stranded DNA into large acid-insoluble oligonucleotides, which are then degraded further into small acid-soluble oligonucleotides. This is Exodeoxyribonuclease 7 small subunit from Haemophilus ducreyi (strain 35000HP / ATCC 700724).